The primary structure comprises 240 residues: UDP-2,3-diacylglucosamine hydrolase (240 aa).

The Mn(2+) site is built by Asp-8, His-10, Asp-41, Asn-79, and His-114. Residue Asn-79–Arg-80 participates in substrate binding. Substrate-binding residues include Asp-122, Ser-160, Thr-164, Lys-167, and His-195. Mn(2+)-binding residues include His-195 and His-197.

Belongs to the LpxH family. Mn(2+) serves as cofactor.

The protein localises to the cell inner membrane. The catalysed reaction is UDP-2-N,3-O-bis[(3R)-3-hydroxytetradecanoyl]-alpha-D-glucosamine + H2O = 2-N,3-O-bis[(3R)-3-hydroxytetradecanoyl]-alpha-D-glucosaminyl 1-phosphate + UMP + 2 H(+). Its pathway is glycolipid biosynthesis; lipid IV(A) biosynthesis; lipid IV(A) from (3R)-3-hydroxytetradecanoyl-[acyl-carrier-protein] and UDP-N-acetyl-alpha-D-glucosamine: step 4/6. In terms of biological role, hydrolyzes the pyrophosphate bond of UDP-2,3-diacylglucosamine to yield 2,3-diacylglucosamine 1-phosphate (lipid X) and UMP by catalyzing the attack of water at the alpha-P atom. Involved in the biosynthesis of lipid A, a phosphorylated glycolipid that anchors the lipopolysaccharide to the outer membrane of the cell. In Pseudomonas paraeruginosa (strain DSM 24068 / PA7) (Pseudomonas aeruginosa (strain PA7)), this protein is UDP-2,3-diacylglucosamine hydrolase.